The following is a 239-amino-acid chain: Ribonuclease PH (239 aa).

Phosphate contacts are provided by residues Arg-87 and 125–127; that span reads GTR.

The protein belongs to the RNase PH family. In terms of assembly, homohexameric ring arranged as a trimer of dimers.

The catalysed reaction is tRNA(n+1) + phosphate = tRNA(n) + a ribonucleoside 5'-diphosphate. In terms of biological role, phosphorolytic 3'-5' exoribonuclease that plays an important role in tRNA 3'-end maturation. Removes nucleotide residues following the 3'-CCA terminus of tRNAs; can also add nucleotides to the ends of RNA molecules by using nucleoside diphosphates as substrates, but this may not be physiologically important. Probably plays a role in initiation of 16S rRNA degradation (leading to ribosome degradation) during starvation. In Cyanothece sp. (strain PCC 7425 / ATCC 29141), this protein is Ribonuclease PH.